Reading from the N-terminus, the 113-residue chain is Nitrogenase vanadium-iron protein delta chain (113 aa).

Hexamer of two alpha, two beta, and two delta chains. Iron-sulfur cluster is required as a cofactor. The cofactor is vanadium cation.

It catalyses the reaction N2 + 8 reduced [2Fe-2S]-[ferredoxin] + 16 ATP + 16 H2O = H2 + 8 oxidized [2Fe-2S]-[ferredoxin] + 2 NH4(+) + 16 ADP + 16 phosphate + 6 H(+). Functionally, the key enzymatic reactions in nitrogen fixation are catalyzed by the nitrogenase complex, which has 2 components: the iron protein (component 2) and a component 1 which is either a molybdenum-iron protein, a vanadium-iron, or an iron-iron protein. This is Nitrogenase vanadium-iron protein delta chain (vnfG) from Azotobacter salinestris.